A 125-amino-acid chain; its full sequence is Large ribosomal subunit protein bL20 (125 aa).

Belongs to the bacterial ribosomal protein bL20 family.

Binds directly to 23S ribosomal RNA and is necessary for the in vitro assembly process of the 50S ribosomal subunit. It is not involved in the protein synthesizing functions of that subunit. This chain is Large ribosomal subunit protein bL20, found in Methylobacterium radiotolerans (strain ATCC 27329 / DSM 1819 / JCM 2831 / NBRC 15690 / NCIMB 10815 / 0-1).